Here is a 1054-residue protein sequence, read N- to C-terminus: Carbamoyl phosphate synthase large chain (1054 aa).

The tract at residues 1–402 (MPRRDDIRSI…SLLKAMASLE (402 aa)) is carboxyphosphate synthetic domain. Residues R129, R169, G175, G176, R208, V210, E215, G241, V242, H243, Q285, and E299 each coordinate ATP. One can recognise an ATP-grasp 1 domain in the interval 133 to 328 (REAMERIGLR…IAKIAARLAV (196 aa)). Mg(2+) contacts are provided by Q285, E299, and N301. Residues Q285, E299, and N301 each contribute to the Mn(2+) site. An oligomerization domain region spans residues 403–531 (IETRDIQARL…YYYSTYEQED (129 aa)). A carbamoyl phosphate synthetic domain region spans residues 532-914 (EVERGENPSV…AFAKALAAAG (383 aa)). The ATP-grasp 2 domain occupies 658-849 (GRLLRELGIP…LARLATRVLL (192 aa)). 9 residues coordinate ATP: R694, K733, E740, G765, V766, H767, S768, Q808, and E820. Mg(2+) is bound by residues Q808, E820, and N822. Residues Q808, E820, and N822 each coordinate Mn(2+). The MGS-like domain maps to 915-1054 (QRLPESGRVY…SLQDLYAART (140 aa)). The interval 915-1054 (QRLPESGRVY…SLQDLYAART (140 aa)) is allosteric domain.

Belongs to the CarB family. As to quaternary structure, composed of two chains; the small (or glutamine) chain promotes the hydrolysis of glutamine to ammonia, which is used by the large (or ammonia) chain to synthesize carbamoyl phosphate. Tetramer of heterodimers (alpha,beta)4. Mg(2+) is required as a cofactor. Mn(2+) serves as cofactor.

It carries out the reaction hydrogencarbonate + L-glutamine + 2 ATP + H2O = carbamoyl phosphate + L-glutamate + 2 ADP + phosphate + 2 H(+). The enzyme catalyses hydrogencarbonate + NH4(+) + 2 ATP = carbamoyl phosphate + 2 ADP + phosphate + 2 H(+). It participates in amino-acid biosynthesis; L-arginine biosynthesis; carbamoyl phosphate from bicarbonate: step 1/1. Its pathway is pyrimidine metabolism; UMP biosynthesis via de novo pathway; (S)-dihydroorotate from bicarbonate: step 1/3. Its function is as follows. Large subunit of the glutamine-dependent carbamoyl phosphate synthetase (CPSase). CPSase catalyzes the formation of carbamoyl phosphate from the ammonia moiety of glutamine, carbonate, and phosphate donated by ATP, constituting the first step of 2 biosynthetic pathways, one leading to arginine and/or urea and the other to pyrimidine nucleotides. The large subunit (synthetase) binds the substrates ammonia (free or transferred from glutamine from the small subunit), hydrogencarbonate and ATP and carries out an ATP-coupled ligase reaction, activating hydrogencarbonate by forming carboxy phosphate which reacts with ammonia to form carbamoyl phosphate. In Rubrobacter xylanophilus (strain DSM 9941 / JCM 11954 / NBRC 16129 / PRD-1), this protein is Carbamoyl phosphate synthase large chain.